Reading from the N-terminus, the 682-residue chain is MKQHQQTSIANIKGIGPETEKTLNELGIYDISDLLNYFPYRYDDYELRDLEEVKHDERVTVEGKVHSEPSLTYYGKKRNRLTFRLLVGHYLITAVCFNRPYLKKKLSLGSVVTVSGKWDKHRQTISVQELKNGPHQEDKSIEPVYSVKENVTVKMMRRFIQQALTQYADSLPDPLPEKLRKSYKLPDYYQALKAMHQPETREALKLARRRFVYEEFLLFQLKMQAFRKAEREQTQGIRQRFSNEELMRFIKSLPFPLTNAQSRVLREITADMSSPYRMNRLLQGDVGSGKTAVAAIALYAAILSGYQGALMVPTEILAEQHADSLVSLFEKWDVSVALLTSSVKGKRRKELLERLAAGEIDILVGTHALIQDEVEFKALSLVITDEQHRFGVEQRKKLRNKGQDPDVLFMTATPIPRTLAITVFGEMDVSVIDEMPAGRKRIETYWVKHDMLDRILAFVEKELKQGRQAYIICPLIEESDKLDVQNAIDVYNMLSDIFRGKWNVGLMHGKLHSDEKDQVMREFSANHCQILVSTTVVEVGVNVPNATIMVIYDADRFGLSQLHQLRGRVGRGEHQSFCILMADPKSETGKERMRIMSETNDGFELSEKDLELRGPGDFFGKKQSGMPEFKVADMVHDYRALETARQDAANLVASDAFWKEPEYAVLRDELLKSGVMDGEKLS.

The wedge domain stretch occupies residues 46-139; it reads ELRDLEEVKH…LKNGPHQEDK (94 aa). Residues 271-432 enclose the Helicase ATP-binding domain; that stretch reads DMSSPYRMNR…VFGEMDVSVI (162 aa). An ATP-binding site is contributed by 284 to 291; the sequence is GDVGSGKT. A DEAH box motif is present at residues 385-388; it reads DEQH. Residues 451-611 enclose the Helicase C-terminal domain; the sequence is MLDRILAFVE…GFELSEKDLE (161 aa).

It belongs to the helicase family. RecG subfamily. In terms of assembly, monomer. Interacts with SSB (sbbA), via the latter's 6 C-terminal residues. Colocalizes with DNA pol III subunit gamma/tau (dnaX).

The protein resides in the cytoplasm. The protein localises to the nucleoid. The enzyme catalyses Couples ATP hydrolysis with the unwinding of duplex DNA by translocating in the 3'-5' direction.. It carries out the reaction ATP + H2O = ADP + phosphate + H(+). Its activity is regulated as follows. Replication fork regression on Holliday junctions (HJ) is inhibited by DisA; DisA inhibits the ATPase activity of RecG. Critical role in recombination and DNA repair. Helps process Holliday junction intermediates to mature products by catalyzing branch migration. Has a DNA unwinding activity characteristic of a DNA helicase with 3'-5' polarity. Unwinds branched duplex DNA (Y-DNA), Holliday junction (HJ) DNA and partially replicated forks as well as catalyzing fork reversal/regression. Does not seem to unwind R-loops. Inhibits the diadenylate cyclase (DAC) activity of DisA in the presence but not absence of HJ DNA, possibly by relocating DisA from the junction. This Bacillus subtilis (strain 168) protein is ATP-dependent DNA helicase RecG.